Reading from the N-terminus, the 256-residue chain is 5'-nucleotidase SurE (256 aa).

Residues aspartate 8, aspartate 9, serine 39, and asparagine 91 each coordinate a divalent metal cation.

The protein belongs to the SurE nucleotidase family. A divalent metal cation is required as a cofactor.

It localises to the cytoplasm. The catalysed reaction is a ribonucleoside 5'-phosphate + H2O = a ribonucleoside + phosphate. In terms of biological role, nucleotidase that shows phosphatase activity on nucleoside 5'-monophosphates. In Marinobacter nauticus (strain ATCC 700491 / DSM 11845 / VT8) (Marinobacter aquaeolei), this protein is 5'-nucleotidase SurE.